The following is a 307-amino-acid chain: Elongation factor Ts (307 aa).

Residues Thr-79–Val-82 are involved in Mg(2+) ion dislocation from EF-Tu.

It belongs to the EF-Ts family.

It is found in the cytoplasm. In terms of biological role, associates with the EF-Tu.GDP complex and induces the exchange of GDP to GTP. It remains bound to the aminoacyl-tRNA.EF-Tu.GTP complex up to the GTP hydrolysis stage on the ribosome. In Sinorhizobium fredii (strain NBRC 101917 / NGR234), this protein is Elongation factor Ts.